The sequence spans 146 residues: 3-dehydroquinate dehydratase (146 aa).

The active-site Proton acceptor is tyrosine 22. Substrate-binding residues include asparagine 73, histidine 79, and aspartate 86. Residue histidine 99 is the Proton donor of the active site. Substrate contacts are provided by residues 100 to 101 (IS) and arginine 110.

Belongs to the type-II 3-dehydroquinase family. As to quaternary structure, homododecamer.

The enzyme catalyses 3-dehydroquinate = 3-dehydroshikimate + H2O. It functions in the pathway metabolic intermediate biosynthesis; chorismate biosynthesis; chorismate from D-erythrose 4-phosphate and phosphoenolpyruvate: step 3/7. Catalyzes a trans-dehydration via an enolate intermediate. The polypeptide is 3-dehydroquinate dehydratase (Prochlorococcus marinus subsp. pastoris (strain CCMP1986 / NIES-2087 / MED4)).